The following is a 568-amino-acid chain: Delta 8-(E)-sphingolipid desaturase (568 aa).

The Cytochrome b5 heme-binding domain occupies Asp-2–Asp-77. 2 residues coordinate heme: His-37 and His-60. 2 helical membrane passes run Phe-241–Ala-261 and Leu-272–Trp-292. A Histidine box-1 motif is present at residues His-259 to His-263. The short motif at His-296–His-300 is the Histidine box-2 element. 3 helical membrane-spanning segments follow: residues Tyr-352 to Leu-377, Tyr-389 to Cys-409, and Ile-421 to Ala-441. The Histidine box-3 signature appears at Gln-480–His-484. Residues Ala-549–Tyr-560 show a composition bias toward basic and acidic residues. Residues Ala-549 to Ala-568 are disordered.

This sequence belongs to the fatty acid desaturase type 1 family.

The protein resides in the membrane. It catalyses the reaction an N-acylsphing-4-enine + 2 Fe(II)-[cytochrome b5] + O2 + 2 H(+) = a (4E,8E)-4-sphinga-4,8-dienine ceramide + 2 Fe(III)-[cytochrome b5] + 2 H2O. It participates in lipid metabolism; sphingolipid metabolism. Functionally, delta(8)-fatty-acid desaturase which introduces a double bond at the 8-position in the long-chain base (LCB) of ceramides. Required for the formation of the di-unsaturated sphingoid base (E,E)-sphinga-4,8-dienine during glucosylceramide (GluCer) biosynthesis. In Lachancea kluyveri (strain ATCC 58438 / CBS 3082 / BCRC 21498 / NBRC 1685 / JCM 7257 / NCYC 543 / NRRL Y-12651) (Yeast), this protein is Delta 8-(E)-sphingolipid desaturase.